We begin with the raw amino-acid sequence, 121 residues long: ORF8 protein (121 aa).

Residues 1-15 (MKFLVFLGIITTVAA) form the signal peptide. Residues 19–121 (ECSLQSCTQH…HDVRVVLDFI (103 aa)) form the SARS ORF8 Ig-like domain. Disulfide bonds link C25-C90, C37-C102, and C61-C83. N78 carries an N-linked (GlcNAc...) (complex) asparagine; by host glycan.

As to quaternary structure, homodimer. Interacts with host IL17RA. Interacts with host IL17RC. Interacts with host MHC-I. Glycosylated by the host when secreted via the conventional pathway. The glycosylated form cannot bind IL17A and would not participate in the cytokine storm.

The protein localises to the secreted. Functionally, plays a role in modulating the host immune response. May act as a secreted virokine by mimicking interleukin-17A (IL17A), and thereby binding to the IL17RA receptor, leading to activation of the IL17 pathway and increased secretion of pro-inflammatory factors. Contributes to the cytokine storm during SARS-CoV-2 infection when secreted by unconventional pathway. May act by down-regulating major histocompability complex class I (MHC-I) at cell surface. May inhibit expression of some members of the IFN-stimulated gene (ISG) family including hosts IGF2BP1/ZBP1, MX1 and MX2, and DHX58. This is ORF8 protein from Severe acute respiratory syndrome coronavirus 2 (2019-nCoV).